The sequence spans 83 residues: uncharacterized protein (83 aa).

A signal peptide spans 1-20; that stretch reads MRRALTLAVLATCAVLPALA.

The protein to P.denitrificans and M.extorquens MoxJ.

This is an uncharacterized protein from Paracoccus denitrificans.